A 245-amino-acid polypeptide reads, in one-letter code: Thioredoxin-like 1-2, chloroplastic (245 aa).

Residues 1–92 (MDAISSLGTN…TNHNMLEIQS (92 aa)) constitute a chloroplast transit peptide. Residues 93–194 (ANHLVDSLLN…FKKALDKHGS (102 aa)) form the Thioredoxin domain. Residues cysteine 117 and cysteine 120 each act as nucleophile in the active site. An intrachain disulfide couples cysteine 117 to cysteine 120.

It belongs to the thioredoxin family.

The protein resides in the plastid. It localises to the chloroplast. Its function is as follows. Probable thiol-disulfide oxidoreductase that may participate in various redox reactions. This chain is Thioredoxin-like 1-2, chloroplastic, found in Arabidopsis thaliana (Mouse-ear cress).